A 183-amino-acid chain; its full sequence is Akirin-1B (183 aa).

The segment at 14 to 43 is disordered; the sequence is EALMSPQSPKRRRCAPLPGSPATPSPQRCG. Positions 180–183 match the SYVS motif motif; it reads SYVS.

It belongs to the akirin family.

The protein localises to the nucleus. Molecular adapter that acts as a bridge between proteins, and which is involved skeletal muscle development. Functions as a signal transducer for MSTN during skeletal muscle regeneration and myogenesis. The polypeptide is Akirin-1B (akirin1-b) (Xenopus laevis (African clawed frog)).